Reading from the N-terminus, the 64-residue chain is Large ribosomal subunit protein uL30 (64 aa).

It belongs to the universal ribosomal protein uL30 family. Part of the 50S ribosomal subunit.

The protein is Large ribosomal subunit protein uL30 of Rhodopseudomonas palustris (strain HaA2).